A 229-amino-acid chain; its full sequence is MDAKIKPLRAGKSADARTDFQPAELDPSEFLAAAVQPDQPRPSRAEAEAAVKTLLSYIGENTEREGLLDTPRRVVEAYDELFQGYHQCPAEVLDRTFGETAGYDDFVLVRDISFTSHCEHHVMPFYGKAHIAYTPVERVVGLSKLARLVEIFARRLQTQEHLTAQIAAAIDEVLKPRGVAVMIEAEHTCMSVRGIGKQGASTFTSRYTGMFRDNPAEQARFMSMIRNRG.

A disordered region spans residues 1 to 21 (MDAKIKPLRAGKSADARTDFQ). Zn(2+) contacts are provided by Cys118, His121, and Cys189.

The protein belongs to the GTP cyclohydrolase I family. Toroid-shaped homodecamer, composed of two pentamers of five dimers.

It carries out the reaction GTP + H2O = 7,8-dihydroneopterin 3'-triphosphate + formate + H(+). The protein operates within cofactor biosynthesis; 7,8-dihydroneopterin triphosphate biosynthesis; 7,8-dihydroneopterin triphosphate from GTP: step 1/1. The protein is GTP cyclohydrolase 1 of Rhodopseudomonas palustris (strain HaA2).